The chain runs to 366 residues: GTPase Obg (366 aa).

One can recognise an Obg domain in the interval 1–162 (MRFVDEAVIK…KSLRLELKIL (162 aa)). Positions 125–150 (RGGKGNEHFKSSTMQAPRFSQPGEPG) are disordered. Positions 163 to 335 (ADAGLLGLPN…VVSEMWRMLA (173 aa)) constitute an OBG-type G domain. Residues 169–176 (GLPNAGKS), 194–198 (FTTLV), 218–221 (DIPG), 288–291 (NKID), and 316–318 (SAL) each bind GTP. The Mg(2+) site is built by serine 176 and threonine 196.

This sequence belongs to the TRAFAC class OBG-HflX-like GTPase superfamily. OBG GTPase family. Monomer. The cofactor is Mg(2+).

Its subcellular location is the cytoplasm. An essential GTPase which binds GTP, GDP and possibly (p)ppGpp with moderate affinity, with high nucleotide exchange rates and a fairly low GTP hydrolysis rate. Plays a role in control of the cell cycle, stress response, ribosome biogenesis and in those bacteria that undergo differentiation, in morphogenesis control. This Oleidesulfovibrio alaskensis (strain ATCC BAA-1058 / DSM 17464 / G20) (Desulfovibrio alaskensis) protein is GTPase Obg.